The chain runs to 202 residues: Putative NADH dehydrogenase/NAD(P)H nitroreductase SCO7141 (202 aa).

The protein belongs to the nitroreductase family. HadB/RutE subfamily. It depends on FMN as a cofactor.

This chain is Putative NADH dehydrogenase/NAD(P)H nitroreductase SCO7141, found in Streptomyces coelicolor (strain ATCC BAA-471 / A3(2) / M145).